A 215-amino-acid polypeptide reads, in one-letter code: ER lumen protein-retaining receptor B (215 aa).

The next 6 membrane-spanning stretches (helical) occupy residues 6 to 26 (LAGD…IHTI), 55 to 77 (FVSL…IVWY), 98 to 118 (WFLV…FTFL), 120 to 140 (VLWT…LVLL), 149 to 169 (LTGQ…LNWI), and 178 to 198 (FVHW…ADFF).

The protein belongs to the ERD2 family.

The protein resides in the golgi apparatus membrane. It is found in the endoplasmic reticulum membrane. In terms of biological role, determines the specificity of the luminal endoplasmic reticulum protein retention system. Required for the retro-transport of calreticulin-3 (CRT3) from the Golgi to the ER. Specifically required for elongation factor Tu receptor (EFR) function in response to the pathogen-associated molecular pattern (PAMP) elf18. The protein is ER lumen protein-retaining receptor B (ERD2B) of Arabidopsis thaliana (Mouse-ear cress).